Here is a 1318-residue protein sequence, read N- to C-terminus: DNA-directed RNA polymerase subunit beta' (1318 aa).

Zn(2+) is bound by residues Cys221, Cys295, Cys302, and Cys305.

The protein belongs to the RNA polymerase beta' chain family. RpoC2 subfamily. As to quaternary structure, in cyanobacteria the RNAP catalytic core is composed of 2 alpha, 1 beta, 1 beta', 1 gamma and 1 omega subunit. When a sigma factor is associated with the core the holoenzyme is formed, which can initiate transcription. It depends on Zn(2+) as a cofactor.

It catalyses the reaction RNA(n) + a ribonucleoside 5'-triphosphate = RNA(n+1) + diphosphate. Functionally, DNA-dependent RNA polymerase catalyzes the transcription of DNA into RNA using the four ribonucleoside triphosphates as substrates. In Synechococcus elongatus (strain ATCC 33912 / PCC 7942 / FACHB-805) (Anacystis nidulans R2), this protein is DNA-directed RNA polymerase subunit beta'.